The chain runs to 36 residues: uncharacterized protein (36 aa).

This is an uncharacterized protein from Spiroplasma melliferum (SpV1).